Here is a 578-residue protein sequence, read N- to C-terminus: Arginine--tRNA ligase (578 aa).

Residues 127 to 137 (PNLAKEMHVGH) carry the 'HIGH' region motif.

The protein belongs to the class-I aminoacyl-tRNA synthetase family. In terms of assembly, monomer.

Its subcellular location is the cytoplasm. It carries out the reaction tRNA(Arg) + L-arginine + ATP = L-arginyl-tRNA(Arg) + AMP + diphosphate. The protein is Arginine--tRNA ligase of Pseudomonas entomophila (strain L48).